Reading from the N-terminus, the 300-residue chain is Pantoate--beta-alanine ligase (300 aa).

Position 43-50 (43-50 (MGYLHSGH)) interacts with ATP. Residue His-50 is the Proton donor of the active site. Gln-74 provides a ligand contact to (R)-pantoate. Gln-74 provides a ligand contact to beta-alanine. 162 to 165 (GQKD) is a binding site for ATP. Gln-168 is a (R)-pantoate binding site. ATP-binding positions include Ile-191 and 199-202 (KSSR).

It belongs to the pantothenate synthetase family. Homodimer.

It is found in the cytoplasm. It carries out the reaction (R)-pantoate + beta-alanine + ATP = (R)-pantothenate + AMP + diphosphate + H(+). It participates in cofactor biosynthesis; (R)-pantothenate biosynthesis; (R)-pantothenate from (R)-pantoate and beta-alanine: step 1/1. In terms of biological role, catalyzes the condensation of pantoate with beta-alanine in an ATP-dependent reaction via a pantoyl-adenylate intermediate. The chain is Pantoate--beta-alanine ligase (panC) from Dictyostelium discoideum (Social amoeba).